We begin with the raw amino-acid sequence, 186 residues long: Potassium-transporting ATPase KdpC subunit (186 aa).

The chain crosses the membrane as a helical span at residues 9–29 (AAVVLFGGCLLVLGLLYPLAM).

The protein belongs to the KdpC family. The system is composed of three essential subunits: KdpA, KdpB and KdpC.

Its subcellular location is the cell membrane. Part of the high-affinity ATP-driven potassium transport (or Kdp) system, which catalyzes the hydrolysis of ATP coupled with the electrogenic transport of potassium into the cytoplasm. This subunit acts as a catalytic chaperone that increases the ATP-binding affinity of the ATP-hydrolyzing subunit KdpB by the formation of a transient KdpB/KdpC/ATP ternary complex. In Methanosphaerula palustris (strain ATCC BAA-1556 / DSM 19958 / E1-9c), this protein is Potassium-transporting ATPase KdpC subunit.